Reading from the N-terminus, the 361-residue chain is Chalcone synthase A (361 aa).

The active site involves C168.

Belongs to the thiolase-like superfamily. Chalcone/stilbene synthases family.

It carries out the reaction (E)-4-coumaroyl-CoA + 3 malonyl-CoA + 3 H(+) = 2',4,4',6'-tetrahydroxychalcone + 3 CO2 + 4 CoA. Its pathway is secondary metabolite biosynthesis; flavonoid biosynthesis. Its function is as follows. The primary product of this enzyme is 4,2',4',6'-tetrahydroxychalcone (also termed naringenin-chalcone or chalcone) which can under specific conditions spontaneously isomerize into naringenin. This Ipomoea cordatotriloba (Tievine) protein is Chalcone synthase A (CHSA).